Consider the following 580-residue polypeptide: Keratin, type II cytoskeletal 5 (580 aa).

The head stretch occupies residues 1–161 (MSRQSSVSFR…DPTIQRVRTE (161 aa)). 4 positions are modified to phosphoserine: Ser-5, Ser-8, Ser-16, and Ser-21. Thr-24 is subject to Phosphothreonine; by CDK1. Ser-26, Ser-36, Ser-47, Ser-61, Ser-68, Ser-72, Ser-75, and Ser-79 each carry phosphoserine. Thr-145 carries the phosphothreonine; by CDK1 modification. Thr-160 carries the post-translational modification Phosphothreonine; by AURKB. The interval 162–197 (EREQIKTLNNKFASFIDKVRFLEQQNKVLDTKWALL) is coil 1A. In terms of domain architecture, IF rod spans 162–475 (EREQIKTLNN…KLLEGEECRL (314 aa)). The interval 198-216 (QEQGTKTIKQNLDPLFEQY) is linker 1. The tract at residues 217-309 (INNLRRQLDG…FFDAELSQMQ (93 aa)) is coil 1B. Positions 310–332 (THVSDTSVVLSMDNNRSLDLDSI) are linker 12. The interval 333–471 (IAEVKAQYED…ATYRKLLEGE (139 aa)) is coil 2. Residues 472-580 (ECRLSGEGVG…TSSSRRSFKS (109 aa)) are tail. Residue Arg-526 is modified to Omega-N-methylarginine. The interval 555 to 580 (FGSGGGSGSSVKFVSTTSSSRRSFKS) is disordered. Residues 563-580 (SSVKFVSTTSSSRRSFKS) show a composition bias toward low complexity.

This sequence belongs to the intermediate filament family. As to quaternary structure, heterodimer of a type I and a type II keratin. Heterodimer with type I keratin KRT25 leading to the formation of keratin intermediate filament (KIF) network. Forms a heterodimer (via 2B domains) with KRT14 (via 2B domains). Interacts with PLEC isoform 1C, when in a heterodimer with KRT14. Interacts with TCHP. Interacts with EPPK1. Interacts with AMELX. Interacts with PKP1 (via N-terminus) and PKP2. Post-translationally, phosphorylated by CDK1, AURKB and Rho-kinase, phosphorylation is regulated by the cell cycle. Thr-24 phosphorylation, mediated by CDK1, peaks during prometaphase or metaphase cells with phosphorylated filamentous structures evident throughout the cytoplasm during early mitosis. CDK1 phosphorylates Thr-24 in mitotic cells at the site of injury. O-glycosylated. In terms of tissue distribution, expressed in the corneal epithelium (at protein level). Expressed in the epidermis of the ear (at protein level). Expressed in the basal and spinous layers of the skin at birth (at protein level).

The protein localises to the cytoplasm. Required for the formation of keratin intermediate filaments in the basal epidermis and maintenance of the skin barrier in response to mechanical stress. Regulates the recruitment of Langerhans cells to the epidermis, potentially by modulation of the abundance of macrophage chemotactic cytokines, macrophage inflammatory cytokines and CTNND1 localization in keratinocytes. The protein is Keratin, type II cytoskeletal 5 of Mus musculus (Mouse).